Reading from the N-terminus, the 162-residue chain is Shikimate kinase (162 aa).

Residue glycine 10–threonine 15 coordinates ATP. Residue serine 14 coordinates Mg(2+). Substrate is bound by residues aspartate 28, arginine 52, and glycine 73. Arginine 113 lines the ATP pocket. Arginine 129 is a substrate binding site.

It belongs to the shikimate kinase family. As to quaternary structure, monomer. It depends on Mg(2+) as a cofactor.

Its subcellular location is the cytoplasm. The catalysed reaction is shikimate + ATP = 3-phosphoshikimate + ADP + H(+). It participates in metabolic intermediate biosynthesis; chorismate biosynthesis; chorismate from D-erythrose 4-phosphate and phosphoenolpyruvate: step 5/7. Its function is as follows. Catalyzes the specific phosphorylation of the 3-hydroxyl group of shikimic acid using ATP as a cosubstrate. This chain is Shikimate kinase, found in Lactococcus lactis subsp. cremoris (strain SK11).